Consider the following 312-residue polypeptide: Zinc import ATP-binding protein ZnuC (312 aa).

The 216-residue stretch at 13–228 (VSLEDVGVLR…PEYVRLFGSR (216 aa)) folds into the ABC transporter domain. Residue 45 to 52 (GPNGSGKS) participates in ATP binding. A disordered region spans residues 241–312 (DHTHLPDGRV…HSRSGEGRHA (72 aa)). The segment covering 243–312 (THLPDGRVLH…HSRSGEGRHA (70 aa)) has biased composition (basic and acidic residues).

It belongs to the ABC transporter superfamily. Zinc importer (TC 3.A.1.15.5) family. In terms of assembly, the complex is composed of two ATP-binding proteins (ZnuC), two transmembrane proteins (ZnuB) and a solute-binding protein (ZnuA).

The protein localises to the cell inner membrane. It catalyses the reaction Zn(2+)(out) + ATP(in) + H2O(in) = Zn(2+)(in) + ADP(in) + phosphate(in) + H(+)(in). Part of the ABC transporter complex ZnuABC involved in zinc import. Responsible for energy coupling to the transport system. The polypeptide is Zinc import ATP-binding protein ZnuC (Rhizobium etli (strain ATCC 51251 / DSM 11541 / JCM 21823 / NBRC 15573 / CFN 42)).